The following is a 91-amino-acid chain: MKVSMFVVIVLCMVAASSAGRGARRYCGRVLADTLAYLCPEMEEVEKRSGAQYARYGWQSPESREGARGKRGVVDECCYNSCTLDVLLSYC.

The first 19 residues, 1 to 19 (MKVSMFVVIVLCMVAASSA), serve as a signal peptide directing secretion. 3 disulfides stabilise this stretch: Cys27–Cys78, Cys39–Cys91, and Cys77–Cys82. A propeptide spans 49 to 69 (SGAQYARYGWQSPESREGARG) (c peptide like).

The protein belongs to the insulin family. As to quaternary structure, heterodimer of a B chain and an A chain linked by two disulfide bonds.

It is found in the secreted. Its function is as follows. Brain peptide responsible for activation of prothoracic glands to produce ecdysone in insects. In Samia cynthia (Ailanthus silkmoth), this protein is Bombyxin B-1 homolog (SBXB1).